The following is a 90-amino-acid chain: Kunitz-type serine protease inhibitor B5 (90 aa).

The first 24 residues, 1 to 24 (MSSGGLLLLLGLLTLWAELTPISG), serve as a signal peptide directing secretion. One can recognise a BPTI/Kunitz inhibitor domain in the interval 31-81 (CYLPADPGECLAHMRSFYYDSESKKCKEFIYGGCHGNANKFPSRDKCRQTC). Disulfide bonds link Cys31–Cys81, Cys40–Cys64, and Cys56–Cys77. The propeptide occupies 85-90 (AKGRPT).

It belongs to the venom Kunitz-type family. In terms of tissue distribution, expressed by the venom gland.

The protein resides in the secreted. Functionally, serine protease inhibitor. This Daboia siamensis (Eastern Russel's viper) protein is Kunitz-type serine protease inhibitor B5.